A 590-amino-acid polypeptide reads, in one-letter code: MEHTVKQNKTIACDVLVVGSGAAGMAAALKAASQGLSVIVAEKEQYFGGTTAISAGWAWVPGNRVGTAAGDTREEVETYLKNLAPDTYNADGVAQFLDTVPEALDFFERETDVEFVYPEKAPDYQMDLPGARLGGRAILPKDTDARILGDKRLLMQPYMSSYTVFGYMPQVGPDINEFFHVNQSVKSFVYVAKKLLRTWFDAARYRRPVLRSNGNALMTLMVKSAYDAGVRMWKSSPVLELTRGDDGAVTGAVTGGEHPARVEAKLGVILAAGGFSGNTELRKKYFPHDAAGDDHFTPTVGHGGDAATMTLAAGGRIDDAVSSVGSWAPVTVFRFRDGRQRLFPHLRAIGLPGLIAVDRHGKRFGNEALSYHDFGGRMIAHNAGEDKTFGWVIADEKTMHKYGIGYAKPWPMPRGYFYKMGYLVKGNTLEELADRIGVDAAGLTQTVAEFNVGARAGEDPAFGRGSTEYNHFRGDMEHKPNPNLAPLDKGPYYAAKIQMGDLGTFAGIAVDSDNLVVTEEGTPIPGLLAVGAAARSVFGGGYPGYGSHIGAALVFGYRAGRDVARLASARENGRGIGRPASASVAEEAAR.

This sequence belongs to the FAD-dependent oxidoreductase 2 family. Forms multimers. Requires FAD as cofactor.

The enzyme catalyses 4-oxocyclohex-2-ene-1-carboxylate + NAD(+) = 4-oxocyclohexa-2,5-diene-1-carboxylate + NADH + H(+). Its function is as follows. Desaturase involved in a cyclohexanecarboxylate (CHCA) degradation pathway. Probably catalyzes the conversion of 4-oxocyclohexenecarboxylate to 4-oxocyclohex-2,5-dienecarboxylate, which is spontaneously isomerized to 4-hydroxybenzoate (4-HBA). This Sinomonas cyclohexanicum (Corynebacterium cyclohexanicum) protein is 4-oxocyclohex-2-ene-1-carboxylate 5-dehydrogenase.